A 148-amino-acid chain; its full sequence is Large ribosomal subunit protein uL15 (148 aa).

Basic residues predominate over residues 1-30; that stretch reads MPSRLRKTRKLRGHVSHGHGRIGKHRKHPG. A disordered region spans residues 1 to 37; sequence MPSRLRKTRKLRGHVSHGHGRIGKHRKHPGGRGNAGG. Residue histidine 39 is modified to (3S)-3-hydroxyhistidine. N6-acetyllysine occurs at positions 47 and 55. A Phosphoserine modification is found at serine 68. N6-acetyllysine is present on lysine 110.

The protein belongs to the universal ribosomal protein uL15 family. As to quaternary structure, component of the large ribosomal subunit. In terms of processing, hydroxylated on His-39 by MINA.

It is found in the cytoplasm. Component of the large ribosomal subunit. The ribosome is a large ribonucleoprotein complex responsible for the synthesis of proteins in the cell. This chain is Large ribosomal subunit protein uL15 (RPL27A), found in Bos taurus (Bovine).